The primary structure comprises 440 residues: Light-independent protochlorophyllide reductase subunit B (440 aa).

A [4Fe-4S] cluster-binding site is contributed by D36. Residue 427 to 428 coordinates substrate; sequence KD.

Belongs to the ChlB/BchB/BchZ family. As to quaternary structure, protochlorophyllide reductase is composed of three subunits; ChlL, ChlN and ChlB. Forms a heterotetramer of two ChlB and two ChlN subunits. [4Fe-4S] cluster is required as a cofactor.

It is found in the plastid. The protein localises to the cyanelle. It carries out the reaction chlorophyllide a + oxidized 2[4Fe-4S]-[ferredoxin] + 2 ADP + 2 phosphate = protochlorophyllide a + reduced 2[4Fe-4S]-[ferredoxin] + 2 ATP + 2 H2O. Its pathway is porphyrin-containing compound metabolism; chlorophyll biosynthesis (light-independent). Functionally, component of the dark-operative protochlorophyllide reductase (DPOR) that uses Mg-ATP and reduced ferredoxin to reduce ring D of protochlorophyllide (Pchlide) to form chlorophyllide a (Chlide). This reaction is light-independent. The NB-protein (ChlN-ChlB) is the catalytic component of the complex. The chain is Light-independent protochlorophyllide reductase subunit B from Cyanophora paradoxa.